The sequence spans 72 residues: Translation initiation factor IF-1 (72 aa).

Positions 1–72 (MARDDVIEVD…DRGRITFRYK (72 aa)) constitute an S1-like domain.

The protein belongs to the IF-1 family. As to quaternary structure, component of the 30S ribosomal translation pre-initiation complex which assembles on the 30S ribosome in the order IF-2 and IF-3, IF-1 and N-formylmethionyl-tRNA(fMet); mRNA recruitment can occur at any time during PIC assembly.

Its subcellular location is the cytoplasm. Its function is as follows. One of the essential components for the initiation of protein synthesis. Stabilizes the binding of IF-2 and IF-3 on the 30S subunit to which N-formylmethionyl-tRNA(fMet) subsequently binds. Helps modulate mRNA selection, yielding the 30S pre-initiation complex (PIC). Upon addition of the 50S ribosomal subunit IF-1, IF-2 and IF-3 are released leaving the mature 70S translation initiation complex. This is Translation initiation factor IF-1 from Helicobacter acinonychis (strain Sheeba).